The following is a 145-amino-acid chain: MKQQKDASKPAHFFHQVIVIALVLFVSKIIESFMPIPMPASVIGLVLLFVLLCTGAVKLGEVEKVGTTLTNNIGLLFVPAGISVVNSLGVISQAPFLIIGLIIVSTILLLICTGYVTQIIMKVTSRSKGDKVTKKVKIEEAQAHD.

4 helical membrane-spanning segments follow: residues 10–30, 33–53, 72–92, and 96–116; these read PAHFFHQVIVIALVLFVSKII, FMPIPMPASVIGLVLLFVLLC, NIGLLFVPAGISVVNSLGVIS, and FLIIGLIIVSTILLLICTGYV.

It belongs to the CidA/LrgA family. LrgA subfamily.

It localises to the cell membrane. In terms of biological role, inhibits the expression or activity of extracellular murein hydrolases by interacting, possibly with LrgB, with the holin-like proteins CidA and/or CidB. The LrgAB and CidAB proteins may affect the proton motive force of the membrane. May be involved in programmed cell death (PCD), possibly triggering PCD in response to antibiotics and environmental stresses. The sequence is that of Antiholin-like protein LrgA from Staphylococcus aureus (strain JH1).